Reading from the N-terminus, the 1047-residue chain is Atrial natriuretic peptide receptor 2 (1047 aa).

Positions 1-16 (MALPSLLLVVAALAGG) are cleaved as a signal peptide. Residues 17–458 (VRPPGARNLT…DKTPLSTLAI (442 aa)) are Extracellular-facing. Asn-24 and Asn-35 each carry an N-linked (GlcNAc...) asparagine glycan. An intrachain disulfide couples Cys-75 to Cys-101. N-linked (GlcNAc...) asparagine glycosylation is found at Asn-161, Asn-195, Asn-244, Asn-277, and Asn-349. The helical transmembrane segment at 459–478 (VALGTGITFIMFGVSSFLIF) threads the bilayer. Residues 479–1047 (RKLMLEKELA…GERKGPPGLL (569 aa)) lie on the Cytoplasmic side of the membrane. Ser-513 is subject to Phosphoserine. Residues 513 to 786 (SRLTLSLRGS…PDFGQIKGFI (274 aa)) enclose the Protein kinase domain. Thr-516 bears the Phosphothreonine mark. Ser-518, Ser-522, Ser-523, and Ser-526 each carry phosphoserine. Thr-529 carries the phosphothreonine modification. Residues 861–991 (TIYFSDIVGF…DTVNTASRME (131 aa)) form the Guanylate cyclase domain.

This sequence belongs to the adenylyl cyclase class-4/guanylyl cyclase family. Phosphorylated. Phosphorylation of the protein kinase-like domain is required for full activation by CNP. Post-translationally, glycosylated.

It is found in the cell membrane. The catalysed reaction is GTP = 3',5'-cyclic GMP + diphosphate. Its function is as follows. Receptor for the C-type natriuretic peptide NPPC/CNP hormone. Has guanylate cyclase activity upon binding of its ligand. May play a role in the regulation of skeletal growth. In Rattus norvegicus (Rat), this protein is Atrial natriuretic peptide receptor 2 (Npr2).